The sequence spans 519 residues: 6-phosphofructo-2-kinase/fructose-2,6-bisphosphatase 2 (519 aa).

A compositionally biased stretch (polar residues) spans 1 to 17 (MSENSTFSTEDSCNSSY). A disordered region spans residues 1-22 (MSENSTFSTEDSCNSSYKPHAS). N-acetylserine is present on serine 2. Residues 2-251 (SENSTFSTED…VYYLMNIHVH (250 aa)) form a 6-phosphofructo-2-kinase region. Serine 32 is modified (phosphoserine; by PKA). 48–56 (GLPARGKTY) is an ATP binding site. 2 residues coordinate beta-D-fructose 6-phosphate: arginine 81 and arginine 105. Aspartate 131 is an active-site residue. Positions 133 and 139 each coordinate beta-D-fructose 6-phosphate. Cysteine 161 is a catalytic residue. Residue 170 to 175 (NILEVK) coordinates ATP. 3 residues coordinate beta-D-fructose 6-phosphate: lysine 175, arginine 196, and tyrosine 200. Residues 252 to 519 (PRTIYLCRHG…PKTQVSIPVV (268 aa)) are fructose-2,6-bisphosphatase. Arginine 259 serves as a coordination point for beta-D-fructose 2,6-bisphosphate. Histidine 260 serves as the catalytic Tele-phosphohistidine intermediate. Beta-D-fructose 2,6-bisphosphate-binding residues include asparagine 266 and glycine 272. The active-site Proton donor/acceptor is glutamate 329. Beta-D-fructose 2,6-bisphosphate is bound by residues tyrosine 340, arginine 354, lysine 358, tyrosine 369, glutamine 395, and arginine 399. 351-354 (FALR) contacts ATP. ATP-binding positions include 395–399 (QAVMR) and tyrosine 431. A disordered region spans residues 448-493 (HRDKPTHNFPKSQTPVRMRRNSFTPLSSSNTIRRPRNYSVGSRPLK). Over residues 456-479 (FPKSQTPVRMRRNSFTPLSSSNTI) the composition is skewed to polar residues. Position 469 is a phosphoserine (serine 469). The residue at position 471 (threonine 471) is a Phosphothreonine. Residue threonine 478 is modified to Phosphothreonine; by PKC. 2 positions are modified to phosphoserine: serine 486 and serine 496. Positions 500–519 (ALDMQEGADQPKTQVSIPVV) are disordered. A compositionally biased stretch (polar residues) spans 510–519 (PKTQVSIPVV).

This sequence in the C-terminal section; belongs to the phosphoglycerate mutase family. In terms of assembly, homodimer. Forms a heterodimer with PFKFB3. Post-translationally, phosphorylation by AMPK stimulates activity. In terms of tissue distribution, highest levels in kidney; also found in heart, brain, spleen, lung, liver, skeletal muscle and testis.

The catalysed reaction is beta-D-fructose 2,6-bisphosphate + H2O = beta-D-fructose 6-phosphate + phosphate. It catalyses the reaction beta-D-fructose 6-phosphate + ATP = beta-D-fructose 2,6-bisphosphate + ADP + H(+). With respect to regulation, phosphorylation results in the activation of the kinase activity. Synthesis and degradation of fructose 2,6-bisphosphate. The chain is 6-phosphofructo-2-kinase/fructose-2,6-bisphosphatase 2 (Pfkfb2) from Mus musculus (Mouse).